The primary structure comprises 349 residues: Lipoyl synthase (349 aa).

Positions 55, 60, 66, 81, 85, 88, and 292 each coordinate [4Fe-4S] cluster. A Radical SAM core domain is found at 67 to 281 (WEDREATFLI…SDAAYELGIK (215 aa)). Positions 321-349 (LDSTTSQEASTLLERYGASEDTPVTASRR) are disordered.

Belongs to the radical SAM superfamily. Lipoyl synthase family. [4Fe-4S] cluster is required as a cofactor.

Its subcellular location is the cytoplasm. The enzyme catalyses [[Fe-S] cluster scaffold protein carrying a second [4Fe-4S](2+) cluster] + N(6)-octanoyl-L-lysyl-[protein] + 2 oxidized [2Fe-2S]-[ferredoxin] + 2 S-adenosyl-L-methionine + 4 H(+) = [[Fe-S] cluster scaffold protein] + N(6)-[(R)-dihydrolipoyl]-L-lysyl-[protein] + 4 Fe(3+) + 2 hydrogen sulfide + 2 5'-deoxyadenosine + 2 L-methionine + 2 reduced [2Fe-2S]-[ferredoxin]. It participates in protein modification; protein lipoylation via endogenous pathway; protein N(6)-(lipoyl)lysine from octanoyl-[acyl-carrier-protein]: step 2/2. Catalyzes the radical-mediated insertion of two sulfur atoms into the C-6 and C-8 positions of the octanoyl moiety bound to the lipoyl domains of lipoate-dependent enzymes, thereby converting the octanoylated domains into lipoylated derivatives. The chain is Lipoyl synthase from Corynebacterium jeikeium (strain K411).